The sequence spans 67 residues: Conotoxin Cl6.8 (67 aa).

The first 22 residues, 1–22, serve as a signal peptide directing secretion; that stretch reads MKVTAVLMVAVLVLTACQLTTA. The propeptide occupies 23 to 39; the sequence is NTTDYVRRILARKSTMS. Intrachain disulfides connect cysteine 43–cysteine 58, cysteine 50–cysteine 62, and cysteine 57–cysteine 66. Position 66 is a cysteine amide (cysteine 66).

This sequence belongs to the conotoxin O1 superfamily. As to expression, expressed by the venom duct.

The protein localises to the secreted. This is Conotoxin Cl6.8 from Californiconus californicus (California cone).